A 367-amino-acid polypeptide reads, in one-letter code: Inositol-3-phosphate synthase (367 aa).

Ser-2 is modified (N-acetylserine). Residue Lys-73 forms an Isoglutamyl lysine isopeptide (Lys-Gln) (interchain with Q-Cter in protein Pup) linkage. NAD(+) contacts are provided by Asp-78, Ala-137, Tyr-157, Ser-200, Asp-235, and Lys-248.

It belongs to the myo-inositol 1-phosphate synthase family. The cofactor is NAD(+). Pupylated at Lys-73 by the prokaryotic ubiquitin-like protein Pup, which leads to its degradation by the proteasome.

It carries out the reaction D-glucose 6-phosphate = 1D-myo-inositol 3-phosphate. In terms of biological role, key enzyme in myo-inositol biosynthesis pathway that catalyzes the conversion of glucose 6-phosphate to 1D-myo-inositol 3-phosphate in a NAD-dependent manner. This chain is Inositol-3-phosphate synthase (ino1), found in Mycobacterium tuberculosis (strain ATCC 25618 / H37Rv).